The sequence spans 286 residues: Bifunctional protein FolD 2 (286 aa).

NADP(+) contacts are provided by residues 165–167 (GRG), T192, and I233.

The protein belongs to the tetrahydrofolate dehydrogenase/cyclohydrolase family. In terms of assembly, homodimer.

It carries out the reaction (6R)-5,10-methylene-5,6,7,8-tetrahydrofolate + NADP(+) = (6R)-5,10-methenyltetrahydrofolate + NADPH. The catalysed reaction is (6R)-5,10-methenyltetrahydrofolate + H2O = (6R)-10-formyltetrahydrofolate + H(+). It functions in the pathway one-carbon metabolism; tetrahydrofolate interconversion. Functionally, catalyzes the oxidation of 5,10-methylenetetrahydrofolate to 5,10-methenyltetrahydrofolate and then the hydrolysis of 5,10-methenyltetrahydrofolate to 10-formyltetrahydrofolate. This is Bifunctional protein FolD 2 from Salinispora tropica (strain ATCC BAA-916 / DSM 44818 / JCM 13857 / NBRC 105044 / CNB-440).